A 262-amino-acid polypeptide reads, in one-letter code: Late embryogenesis abundant protein 31 (262 aa).

The Nuclear localization signal (NLS) motif lies at 6–10; the sequence is QPKRP. 3 consecutive SMP domains span residues 14–68, 136–192, and 201–260; these read VTYG…ANKR, ITIG…NHNA, and IKLI…NERA.

The protein belongs to the LEA type SMP family. As to expression, embryo specific, only in dry mature seeds.

Its subcellular location is the nucleus. It localises to the nucleolus. It is found in the cytoplasm. Functionally, LEA proteins are late embryonic proteins abundant in higher plant seed embryos. The function of those proteins is not known. Promotes germination rate. Enhances cation toxicity (e.g. lithium ion) and osmotic stress (e.g. NaCl and sorbitol) tolerance during germination and in seedlings. The protein is Late embryogenesis abundant protein 31 of Arabidopsis thaliana (Mouse-ear cress).